We begin with the raw amino-acid sequence, 485 residues long: Protein LAZ1 (485 aa).

Residues 1–19 (MDILKSYHLLAAAYSAPAW) are Cytoplasmic-facing. A helical membrane pass occupies residues 20 to 40 (ASFMAGAFLVLTLSLSLFLVF). At 41–53 (DHLSTYKNPEEQK) the chain is on the lumenal side. The chain crosses the membrane as a helical span at residues 54–74 (FLIGVILMVPCYSIESFASLV). The Cytoplasmic segment spans residues 75-167 (KPSISVDCGI…QVVKFGIVQY (93 aa)). The chain crosses the membrane as a helical span at residues 168-188 (MIIKSLTALTALILEAFGVYC). The Lumenal portion of the chain corresponds to 189-196 (EGEFKWGC). A helical membrane pass occupies residues 197–217 (GYPYLAVVLNFSQSWALYCLV). At 218 to 241 (QFYGATKDELAHIQPLAKFLTFKS) the chain is on the cytoplasmic side. Residues 242 to 262 (IVFLTWWQGVAIALLSSLGLF) form a helical membrane-spanning segment. The Lumenal portion of the chain corresponds to 263–277 (KSSIAQSLQLKTSVQ). Residues 278–298 (DFIICIEMGIASVVHLYVFPA) traverse the membrane as a helical segment. Residues 299 to 485 (KPYGLMGDRF…VRGRRWITKD (187 aa)) lie on the Cytoplasmic side of the membrane. A coiled-coil region spans residues 384–415 (MEKSITKFNEKLHKISQNIKKHDKEKRRVKDD). Residues 400-485 (QNIKKHDKEK…VRGRRWITKD (86 aa)) are disordered. The segment covering 403 to 416 (KKHDKEKRRVKDDS) has biased composition (basic and acidic residues). Residues 455–469 (GYTSAESGGESSSDQ) show a composition bias toward polar residues. A compositionally biased stretch (basic and acidic residues) spans 476-485 (VRGRRWITKD).

Belongs to the TMEM184 family.

Its subcellular location is the endomembrane system. The protein localises to the cell membrane. It is found in the cytoplasm. It localises to the cytosol. In terms of biological role, required for programmed cell death (PCD) associated with hypersensitive response (HR). Involved both in the induction of EDS1/PAD4 mediated HR and in accelerated cell death in the acd11 mutant. Not required for HR induction elicited through pathways exclusively dependent on CC-NB-LRR resistance proteins. The polypeptide is Protein LAZ1 (Arabidopsis thaliana (Mouse-ear cress)).